A 376-amino-acid chain; its full sequence is uncharacterized protein (376 aa).

Positions 82 to 372 constitute a Peptidase M14 domain; it reads KIYDDSAVEK…ATSGILWRAL (291 aa). Zn(2+) contacts are provided by H138, E141, and H283. The active-site Proton donor/acceptor is E344.

The protein belongs to the peptidase M14 family. Zn(2+) serves as cofactor.

This is an uncharacterized protein from Bacillus subtilis (strain 168).